A 459-amino-acid chain; its full sequence is Heat stress transcription factor A-4d (459 aa).

Positions 127–189 (AESERRELEE…QKNIVASLCE (63 aa)) form a coiled coil. Residues 141 to 191 (LKYEKSILVADLQRQNQQQYVINWQMQAMEGRLVAMEQRQKNIVASLCEML) are hydrophobic repeat HR-A/B. The short motif at 209–213 (SKKRR) is the Nuclear localization signal element. A compositionally biased stretch (polar residues) spans 364–388 (YPTQADVNSEIASSTDTSQDGTSET). Positions 364-398 (YPTQADVNSEIASSTDTSQDGTSETEASHGPTNDV) are disordered. Positions 397-406 (DVFWERFLTE) match the AHA motif.

Belongs to the HSF family. Class A subfamily. Homotrimer. Post-translationally, exhibits temperature-dependent phosphorylation.

It localises to the nucleus. In terms of biological role, transcriptional regulator that specifically binds DNA of heat shock promoter elements (HSE). In Oryza sativa subsp. japonica (Rice), this protein is Heat stress transcription factor A-4d (HSFA4D).